The chain runs to 355 residues: Protein-glutamate methylesterase/protein-glutamine glutaminase 3 (355 aa).

Positions 8–123 constitute a Response regulatory domain; that stretch reads SVLIVDDSGM…AREVEDFVDK (116 aa). A 4-aspartylphosphate modification is found at Asp-59. The disordered stretch occupies residues 139-161; it reads RSAPAAGPTPVPQAPPPPAAPPA. Pro residues predominate over residues 145–159; that stretch reads GPTPVPQAPPPPAAP. The CheB-type methylesterase domain occupies 160–350; that stretch reads PAGDGGIIAI…ASLLEITGAS (191 aa). Catalysis depends on residues Ser-172, His-199, and Asp-292.

The protein belongs to the CheB family. Phosphorylated by CheA. Phosphorylation of the N-terminal regulatory domain activates the methylesterase activity.

It is found in the cytoplasm. It carries out the reaction [protein]-L-glutamate 5-O-methyl ester + H2O = L-glutamyl-[protein] + methanol + H(+). The enzyme catalyses L-glutaminyl-[protein] + H2O = L-glutamyl-[protein] + NH4(+). Involved in chemotaxis. Part of a chemotaxis signal transduction system that modulates chemotaxis in response to various stimuli. Catalyzes the demethylation of specific methylglutamate residues introduced into the chemoreceptors (methyl-accepting chemotaxis proteins or MCP) by CheR. Also mediates the irreversible deamidation of specific glutamine residues to glutamic acid. This is Protein-glutamate methylesterase/protein-glutamine glutaminase 3 from Paramagnetospirillum magneticum (strain ATCC 700264 / AMB-1) (Magnetospirillum magneticum).